A 648-amino-acid polypeptide reads, in one-letter code: MHWTPEHAQPLNQWPEQHLDVSSTTPSPAHKLELPPGGRQRCHYAWAHDDISALTASNLLKRYAEKYSGVLDSPYERPGLGSYGDAAFLNGAKADPEPWPGPEPPYPLASLHEGLPGAKPAGAGGSAGLGGSPVVAGNLTEPLYTGNACGGPSAATEYAAGYGGGYLASGYCAQTSAALAPPPPAALLQPAPPPGYGPSAPLYNYPAAGYAAQPGYGALPPPAAPPAPYLPSGLAAPTPLPAPAPAPPRPAPYGFPGAAEGVSLKRKAVDEGAEARYRKYAYEPAKAPAADGAAYPAADDAECRGNGFRAKPPGTTEDGTGKYGGGGSLKVLGSPAYAPQLEPFDKFAERVPAAHGGFAEPSGEPAKGVDPGTLELVSSKMVDCGPPVQWADVAGQGALKAALEEELLWPLLRPPACPGSARPPRTVLFFGPRGCGKALLGRCLATRLGATLLRLRGAGLATSGAVEGARLLQAAFAAARCRPPAVLLISELDALLPARDDGASLRAPLLTCLDGGCGARADGVLVVGTTSRPAALDEATRRRFALRFYVALPDGAARGQILQRALAQQGCVLSERELAALVQGTQGFSGGELGQLCQQAAAEAGLSGLQRPLSYKEVEAALAKVGPRAPPKELDSLVEWDKMYGSGH.

The tract at residues 1–36 (MHWTPEHAQPLNQWPEQHLDVSSTTPSPAHKLELPP) is disordered. Residues 10 to 27 (PLNQWPEQHLDVSSTTPS) show a composition bias toward polar residues. Residues alanine 394 and 434-439 (GCGKAL) contribute to the ATP site.

It belongs to the AAA ATPase family. Mg(2+) is required as a cofactor.

The protein localises to the cytoplasm. It is found in the cell cortex. The catalysed reaction is ATP + H2O = ADP + phosphate + H(+). Functionally, microtubule-severing enzyme that negatively regulates cell migration and wound healing. In migrating cells, targets dynamic microtubules (MTs) at the leading edge and severs them, thereby suppressing motility. Microtubule severing releases ARHGEF2 which activates RHOA, which in turn regulates focal ahesion turnover via focal adhesion kinase, as opposed to F-actin polymerization, to suppress cell motility. Negative regulator of axon regeneration that suppresses axonal growth by selectively severing dynamic MTs in the distal axon shaft and growth cone. Contributes to proper cell branching during endothelial and neuronal development. This Rattus norvegicus (Rat) protein is Fidgetin-like protein 2 (Fignl2).